A 505-amino-acid chain; its full sequence is Lysine--tRNA ligase (505 aa).

Mg(2+) is bound by residues E415 and E422.

It belongs to the class-II aminoacyl-tRNA synthetase family. Homodimer. The cofactor is Mg(2+).

The protein localises to the cytoplasm. The enzyme catalyses tRNA(Lys) + L-lysine + ATP = L-lysyl-tRNA(Lys) + AMP + diphosphate. This is Lysine--tRNA ligase from Yersinia pseudotuberculosis serotype O:1b (strain IP 31758).